The primary structure comprises 82 residues: Cytotoxin 10 (82 aa).

The N-terminal stretch at M1 to T22 is a signal peptide. 4 cysteine pairs are disulfide-bonded: C25–C43, C36–C60, C64–C75, and C76–C81.

Belongs to the three-finger toxin family. Short-chain subfamily. Type IA cytotoxin sub-subfamily. As to quaternary structure, monomer in solution; Homodimer and oligomer in the presence of negatively charged lipids forming a pore with a size ranging between 20 and 30 Angstroms. In terms of tissue distribution, expressed by the venom gland.

The protein localises to the secreted. It is found in the target cell membrane. Functionally, shows cytolytic activity on many different cells by forming pore in lipid membranes. In vivo, increases heart rate or kills the animal by cardiac arrest. In addition, it binds to heparin with high affinity, interacts with Kv channel-interacting protein 1 (KCNIP1) in a calcium-independent manner, and binds to integrin alpha-V/beta-3 (ITGAV/ITGB3) with moderate affinity. The protein is Cytotoxin 10 of Naja atra (Chinese cobra).